Here is a 198-residue protein sequence, read N- to C-terminus: Cytochrome c oxidase assembly protein CtaG (198 aa).

Over 1 to 12 (MADTGQSDRKER) the chain is Cytoplasmic. The helical; Signal-anchor for type II membrane protein transmembrane segment at 13-35 (SNGVIVGTCLAFVVGMVGMAYAA) threads the bilayer. The Periplasmic portion of the chain corresponds to 36–198 (VPLYDMFCRV…QVKSRTENKL (163 aa)).

The protein belongs to the COX11/CtaG family.

Its subcellular location is the cell inner membrane. In terms of biological role, exerts its effect at some terminal stage of cytochrome c oxidase synthesis, probably by being involved in the insertion of the copper B into subunit I. This chain is Cytochrome c oxidase assembly protein CtaG, found in Sinorhizobium medicae (strain WSM419) (Ensifer medicae).